The chain runs to 122 residues: MTDAPRSPDALSPDRVTTAFDLPGHTTVRALGVAQGIVVRSRSIVGTFGASLQTLFGGNITLYTSLCEKARQHAFDKMLDDARRLGANAVVAMRYDSTEIGSGVTEVICYGTAVQVAPDAGR.

This sequence belongs to the UPF0145 family.

This chain is UPF0145 protein Bmul_3577/BMULJ_04940, found in Burkholderia multivorans (strain ATCC 17616 / 249).